A 439-amino-acid chain; its full sequence is Serine/threonine-protein kinase 2 (439 aa).

In terms of domain architecture, Protein kinase spans 87-439 (NDDFYHISTG…IFSDWINGGN (353 aa)). ATP-binding positions include 93-101 (ISTGGYGIV) and Lys117. The Proton acceptor role is filled by Asp307.

The protein belongs to the protein kinase superfamily. Ser/Thr protein kinase family. Poxviruses subfamily. In terms of processing, phosphorylated in vivo. Autophosphorylated in vitro.

The protein localises to the host endoplasmic reticulum. It localises to the host endoplasmic reticulum-Golgi intermediate compartment. It carries out the reaction L-seryl-[protein] + ATP = O-phospho-L-seryl-[protein] + ADP + H(+). The catalysed reaction is L-threonyl-[protein] + ATP = O-phospho-L-threonyl-[protein] + ADP + H(+). Essential serine-protein kinase involved in the early stage of virion morphogenesis. This is Serine/threonine-protein kinase 2 (OPG054) from Vaccinia virus (strain Ankara) (VACV).